We begin with the raw amino-acid sequence, 215 residues long: Protein FAM27D1 (215 aa).

Residues 74-172 (QPKTHTHTGM…RGTQADLSSR (99 aa)) form a disordered region. Positions 87-108 (THRERERNTQRLRDRERRENGR) are enriched in basic and acidic residues. Over residues 109–122 (HTHRHTHTLTHTHT) the composition is skewed to basic residues. 2 stretches are compositionally biased toward basic and acidic residues: residues 123–139 (HRDT…ETHT) and 149–162 (SAHD…REQP). Residues 163–172 (RGTQADLSSR) show a composition bias toward polar residues.

Belongs to the FAM27 family.

This chain is Protein FAM27D1 (FAM27D1), found in Homo sapiens (Human).